A 109-amino-acid chain; its full sequence is Probable guanidinium efflux system subunit GdnC (109 aa).

Helical transmembrane passes span 3-23 (WGSV…LKHA), 26-46 (ALEW…LVKA), 55-75 (VYAV…IALF), and 81-101 (IAKL…KLVT).

The protein belongs to the drug/metabolite transporter (DMT) superfamily. Small multidrug resistance (SMR) (TC 2.A.7.1) family. YkkC/YkkD subfamily. The efflux pump is composed of GdnC and GdnD.

Its subcellular location is the cell membrane. Functionally, probably involved in guanidinium transport. This chain is Probable guanidinium efflux system subunit GdnC, found in Bacillus licheniformis (strain ATCC 14580 / DSM 13 / JCM 2505 / CCUG 7422 / NBRC 12200 / NCIMB 9375 / NCTC 10341 / NRRL NRS-1264 / Gibson 46).